A 261-amino-acid chain; its full sequence is tRNA pseudouridine synthase A (261 aa).

Residue Asp-51 is the Nucleophile of the active site. Substrate is bound at residue Tyr-109.

The protein belongs to the tRNA pseudouridine synthase TruA family. As to quaternary structure, homodimer.

The enzyme catalyses uridine(38/39/40) in tRNA = pseudouridine(38/39/40) in tRNA. In terms of biological role, formation of pseudouridine at positions 38, 39 and 40 in the anticodon stem and loop of transfer RNAs. The chain is tRNA pseudouridine synthase A from Haemophilus ducreyi (strain 35000HP / ATCC 700724).